The following is a 364-amino-acid chain: tRNA 2-selenouridine synthase (364 aa).

The 124-residue stretch at 14–137 folds into the Rhodanese domain; it reads LIADTPIIDV…LRQTAIQATI (124 aa). C97 serves as the catalytic S-selanylcysteine intermediate.

Belongs to the SelU family. Monomer.

The enzyme catalyses 5-methylaminomethyl-2-thiouridine(34) in tRNA + selenophosphate + (2E)-geranyl diphosphate + H2O + H(+) = 5-methylaminomethyl-2-selenouridine(34) in tRNA + (2E)-thiogeraniol + phosphate + diphosphate. It carries out the reaction 5-methylaminomethyl-2-thiouridine(34) in tRNA + (2E)-geranyl diphosphate = 5-methylaminomethyl-S-(2E)-geranyl-thiouridine(34) in tRNA + diphosphate. It catalyses the reaction 5-methylaminomethyl-S-(2E)-geranyl-thiouridine(34) in tRNA + selenophosphate + H(+) = 5-methylaminomethyl-2-(Se-phospho)selenouridine(34) in tRNA + (2E)-thiogeraniol. The catalysed reaction is 5-methylaminomethyl-2-(Se-phospho)selenouridine(34) in tRNA + H2O = 5-methylaminomethyl-2-selenouridine(34) in tRNA + phosphate. Its function is as follows. Involved in the post-transcriptional modification of the uridine at the wobble position (U34) of tRNA(Lys), tRNA(Glu) and tRNA(Gln). Catalyzes the conversion of 2-thiouridine (S2U-RNA) to 2-selenouridine (Se2U-RNA). Acts in a two-step process involving geranylation of 2-thiouridine (S2U) to S-geranyl-2-thiouridine (geS2U) and subsequent selenation of the latter derivative to 2-selenouridine (Se2U) in the tRNA chain. This chain is tRNA 2-selenouridine synthase, found in Escherichia coli O17:K52:H18 (strain UMN026 / ExPEC).